Here is a 428-residue protein sequence, read N- to C-terminus: Serine--tRNA ligase (428 aa).

234–236 serves as a coordination point for L-serine; that stretch reads TAE. An ATP-binding site is contributed by 265-267; it reads RRE. Glutamate 288 is an L-serine binding site. 352–355 lines the ATP pocket; sequence EISS. Serine 388 is an L-serine binding site.

Belongs to the class-II aminoacyl-tRNA synthetase family. Type-1 seryl-tRNA synthetase subfamily. In terms of assembly, homodimer. The tRNA molecule binds across the dimer.

It is found in the cytoplasm. The enzyme catalyses tRNA(Ser) + L-serine + ATP = L-seryl-tRNA(Ser) + AMP + diphosphate + H(+). It catalyses the reaction tRNA(Sec) + L-serine + ATP = L-seryl-tRNA(Sec) + AMP + diphosphate + H(+). Its pathway is aminoacyl-tRNA biosynthesis; selenocysteinyl-tRNA(Sec) biosynthesis; L-seryl-tRNA(Sec) from L-serine and tRNA(Sec): step 1/1. Its function is as follows. Catalyzes the attachment of serine to tRNA(Ser). Is also able to aminoacylate tRNA(Sec) with serine, to form the misacylated tRNA L-seryl-tRNA(Sec), which will be further converted into selenocysteinyl-tRNA(Sec). This Synechococcus elongatus (strain ATCC 33912 / PCC 7942 / FACHB-805) (Anacystis nidulans R2) protein is Serine--tRNA ligase.